A 106-amino-acid polypeptide reads, in one-letter code: Large ribosomal subunit protein uL24 (106 aa).

This sequence belongs to the universal ribosomal protein uL24 family. Part of the 50S ribosomal subunit.

In terms of biological role, one of two assembly initiator proteins, it binds directly to the 5'-end of the 23S rRNA, where it nucleates assembly of the 50S subunit. Functionally, one of the proteins that surrounds the polypeptide exit tunnel on the outside of the subunit. This chain is Large ribosomal subunit protein uL24, found in Verminephrobacter eiseniae (strain EF01-2).